The primary structure comprises 1023 residues: MDEMSCGGGGGGARWKRARVAGMGEGKAGGGGGAAFLGLERVGMVVRMLPVPEKVSARARVVRGSLVAHFRGWRVVRETWWWVLLLWILAGSLGSFYLFLFMNAQSLDKRRDSLASMCDERARMLQDQFNVSMNHLQALAILVSTFHHSKTPSAIDQMTFARYAERTAFERPLTSGVAYAVRVTHGEREQFERQQGWAIKKMYSSSNKKQSSPGPGPGDAAVAEIREPAEEYAPVIFAQDAYKHVISFDMLSGNEDRDNILRARKSGKGVLTAPFKLLNNRLGVILTYTVYKYELPAYARPHERIQAAIGYLGGIFDIQALVEKLLKQLASQESIMVNVYDTTNESPISMYGDDTGSGMCHVSVLNFGDPSRKHEMHCRFEKKPPWPWLAITSSFGTLVIALLTGHIFQATVHRIAKVEDDFHKMSELKKRAEDADVAKSQFLATVSHEIRTPMNGVLGMLQMLMDTDLDTTQQDYVRTAQASGKALVSLINEVLDQAKIESGKLELETVPFDLRTVCDDILSLFCGKAQEKGLELAVYVSDQVPQILIGDPGRIRQIITNLVGNSIKFTERGHIYLTVHVVEEVMSCLEVETGIQNTNTLSGYPVANRRCSWESIRLFNRELHSSEKSFAPIASDSISLVISVEDTGVGIPFEAQSRVFTPFMQVGPSIARIHGGTGIGLSISKCLVGLMKGEIGFASKPHVGSTFTFTAVLMRAHCKGNDIKSSEFKGINALVVDHRPVRAKVTKYHLQRLGVKTELTAELNQFISKLNSGSLTAKLVLIDKETWLKESHCTPLLVNKLRNNDKPDSPKLFLLGSSASSPKGGSDTSREHNLNVIMKPLRASMLQVSLRRALGGVDKVHCRNGVVGNSTLGSLLHKKQIIVVDDNIVNLKVAAGALKKYGAEVTCADSGKKAITLLKPPHNFDACFMDIQMPEMDGFEATRRIRVMERDLNERIERGEAPPECASIQRWRTPILAMTADVIQATHEECLKSEMDGYVSKPFEGEQLYSEVARFFQNHDQVE.

Over 1-80 (MDEMSCGGGG…RGWRVVRETW (80 aa)) the chain is Cytoplasmic. A helical transmembrane segment spans residues 81–101 (WWVLLLWILAGSLGSFYLFLF). At 102-387 (MNAQSLDKRR…CRFEKKPPWP (286 aa)) the chain is on the extracellular side. A CHASE domain is found at 151–352 (TPSAIDQMTF…TNESPISMYG (202 aa)). The helical transmembrane segment at 388–408 (WLAITSSFGTLVIALLTGHIF) threads the bilayer. The Cytoplasmic segment spans residues 409 to 1023 (QATVHRIAKV…RFFQNHDQVE (615 aa)). The Histidine kinase domain maps to 445–715 (TVSHEIRTPM…TFTFTAVLMR (271 aa)). Histidine 448 bears the Phosphohistidine; by autocatalysis mark. Response regulatory domains lie at 732 to 854 (NALV…RRAL) and 880 to 1016 (QIIV…ARFF). Aspartate 783 carries the post-translational modification 4-aspartylphosphate. The tract at residues 812–831 (LFLLGSSASSPKGGSDTSRE) is disordered. Polar residues predominate over residues 817–827 (SSASSPKGGSD). Position 930 is a 4-aspartylphosphate (aspartate 930).

Activation probably requires a transfer of a phosphate group between a His in the transmitter domain and an Asp of the receiver domain. As to expression, highly expressed in young leaves and at lower levels in roots, mature leaves, stems and spikelets.

The protein resides in the cell membrane. The enzyme catalyses ATP + protein L-histidine = ADP + protein N-phospho-L-histidine.. Its function is as follows. Cytokinin receptor related to bacterial two-component regulators. Functions as a histidine kinase and transmits the stress signal to a downstream MAPK cascade. The protein is Probable histidine kinase 3 of Oryza sativa subsp. japonica (Rice).